Here is a 122-residue protein sequence, read N- to C-terminus: UPF0145 protein BceJ2315_57450 (122 aa).

Belongs to the UPF0145 family.

This chain is UPF0145 protein BceJ2315_57450, found in Burkholderia cenocepacia (strain ATCC BAA-245 / DSM 16553 / LMG 16656 / NCTC 13227 / J2315 / CF5610) (Burkholderia cepacia (strain J2315)).